The following is a 397-amino-acid chain: Odorant receptor 98a (397 aa).

Topologically, residues 1–43 are cytoplasmic; sequence MLFNYLRKPNPTNLLTSPDSFRYFEYGMFCMGWHTPATHKIIY. A helical transmembrane segment spans residues 44–64; that stretch reads YITSCLIFAWCAVYLPIGIII. Residues 65 to 77 are Extracellular-facing; the sequence is SFKTDINTFTPNE. The chain crosses the membrane as a helical span at residues 78 to 98; it reads LLTVMQLFFNSVGMPFKVLFF. Residues 99–138 lie on the Cytoplasmic side of the membrane; sequence NLYISGFYKAKKLLSEMDKRCTTLKERVEVHQGVVRCNKA. A helical transmembrane segment spans residues 139-159; that stretch reads YLIYQFIYTAYTISTFLSAAL. Topologically, residues 160-192 are extracellular; sequence SGKLPWRIYNPFVDFRESRSSFWKAALNETALM. N187 carries N-linked (GlcNAc...) asparagine glycosylation. A helical transmembrane segment spans residues 193–213; sequence LFAVTQTLMSDIYPLLYGLIL. At 214 to 266 the chain is on the cytoplasmic side; it reads RVHLKLLRLRVESLCTDSGKSDAENEQDLIKCIKDHNLIIDYAAAIRPAVTRT. A helical membrane pass occupies residues 267-287; it reads IFVQFLLIGICLGLSMINLLF. Residues 288–293 lie on the Extracellular side of the membrane; the sequence is FADIWT. The helical transmembrane segment at 294–314 threads the bilayer; sequence GLATVAYINGLMVQTFPFCFV. At 315 to 354 the chain is on the cytoplasmic side; the sequence is CDLLKKDCELLVSAIFHSNWINSSRSYKSSLRYFLKNAQK. The chain crosses the membrane as a helical span at residues 355–375; that stretch reads SIAFTAGSIFPISTGSNIKVA. Residues 376 to 397 are Extracellular-facing; the sequence is KLAFSVVTFVNQLNIADRLTKN.

It belongs to the insect chemoreceptor superfamily. Heteromeric odorant receptor channel (TC 1.A.69) family. Or2a subfamily. Interacts with Orco. Complexes exist early in the endomembrane system in olfactory sensory neurons (OSNs), coupling these complexes to the conserved ciliary trafficking pathway. As to expression, expressed in olfactory sensory neurons in the antenna.

It localises to the cell membrane. Functionally, odorant receptor which mediates acceptance or avoidance behavior, depending on its substrates. The odorant receptor repertoire encodes a large collection of odor stimuli that vary widely in identity, intensity, and duration. May form a complex with Orco to form odorant-sensing units, providing sensitive and prolonged odorant signaling and calcium permeability. The sequence is that of Odorant receptor 98a (Or98a) from Drosophila melanogaster (Fruit fly).